We begin with the raw amino-acid sequence, 431 residues long: MASWLQIPKNSPFSLANIPFGIISSAKITSPVAAVAVGDYALNLSIFASSGGFSQLPVIQPHLGVFSQPTLNAFAALGRPVHRQVREYIQSVFRADTPFPQILKDNSTLQKEALLPLSEVTNHLPMHIGDYTDFYAGLNHAYNVGVLFRGPENALQPNYKHLPVGYHGRASSVVTSGTPIRRPNGQILANPAANPKVPTFSPCKRLDIELELAAFVSKSNELGKPVSIDEAEDHIFGVVLMNDWSARDIQAWEYVPLGPFNAKNFATTITPWVVLLDALEPFRTAGLEPGNRESLLPYLREKRELNAYDIPLEVEITNAGGKPTLISRTNAKNLLYSFPQMLAHHTITGCNMNTGDLLGSGTISGKENQTQGSLLEQTNGKNPLKLADGSERLFLEDGDTVVLRGMAGTEGNYVGFGDCVGTILPALKLEF.

Position 133 (Asp133) interacts with Ca(2+). Tyr135 serves as a coordination point for substrate. The Proton acceptor role is filled by His140. Arg149 is a binding site for substrate. Positions 209, 211, and 243 each coordinate Ca(2+). Asp243 is a Mg(2+) binding site. Substrate contacts are provided by Gln250 and Tyr254. Mg(2+) is bound by residues Lys263 and Thr267. Residue Thr362 participates in substrate binding. The segment covering 362–381 (TISGKENQTQGSLLEQTNGK) has biased composition (polar residues). The disordered stretch occupies residues 362–382 (TISGKENQTQGSLLEQTNGKN).

It belongs to the FAH family. Ca(2+) serves as cofactor. The cofactor is Mg(2+).

The catalysed reaction is 4-fumarylacetoacetate + H2O = acetoacetate + fumarate + H(+). It functions in the pathway amino-acid degradation; L-phenylalanine degradation; acetoacetate and fumarate from L-phenylalanine: step 6/6. Functionally, fumarylacetoacetase; part of the L-tyrosine degradation gene cluster that mediates the biosynthesis of the brownish pigment pyomelanin as an alternative melanin. The 4-hydroxyphenylpyruvate dioxygenase hppD catalyzes the conversion of 4-hydroxyphenylpyruvate to homogentisic acid (HGA). The protein hmgX is crucial for this conversion and thus, probably functions as an accessory factor to mediate specific activity of hppD. The homogentisate 1,2-dioxygenase hmgA is then involved in the cleavage of the aromatic ring of HGA and its conversion to 4-maleylacetoacetate. When hmgA activity is lowered by the cell wall integrity (CWI) signaling pathway, HGA accumulates and leads to the production of pyomelanin through benzoquinone acetic acid after oxidation and polymerization. On the opposite, in non-stress conditions, both hppD and hmgA activities are balanced and HGA is degraded into 4-maleylacetoacetate. 4-maleylacetoacetate is further converted to 4-fumarylacetoacetate by the maleylacetoacetate isomerase maiA, which is degraded into fumarate and acetoacetate by the fumarylacetoacetase fahA. The sequence is that of Fumarylacetoacetase fahA from Aspergillus fumigatus (strain ATCC MYA-4609 / CBS 101355 / FGSC A1100 / Af293) (Neosartorya fumigata).